The primary structure comprises 95 residues: Cobalt transport protein CbiN (95 aa).

2 consecutive transmembrane segments (helical) span residues histidine 5 to glycine 25 and leucine 67 to tyrosine 87.

It belongs to the CbiN family. In terms of assembly, forms an energy-coupling factor (ECF) transporter complex composed of an ATP-binding protein (A component, CbiO), a transmembrane protein (T component, CbiQ) and 2 possible substrate-capture proteins (S components, CbiM and CbiN) of unknown stoichimetry.

It is found in the cell membrane. It functions in the pathway cofactor biosynthesis; adenosylcobalamin biosynthesis. Functionally, part of the energy-coupling factor (ECF) transporter complex CbiMNOQ involved in cobalt import. The polypeptide is Cobalt transport protein CbiN (Methanocaldococcus jannaschii (strain ATCC 43067 / DSM 2661 / JAL-1 / JCM 10045 / NBRC 100440) (Methanococcus jannaschii)).